The following is a 483-amino-acid chain: Membrane-bound lytic murein transglycosylase F (483 aa).

The first 18 residues, 1 to 18 (MKGLIARFIAGFALLLWA), serve as a signal peptide directing secretion. Residues 19–267 (WDMVFPWQQL…RIEEKYFNHL (249 aa)) form a non-LT domain region. Residues 269–483 (HFDYVDIQSY…SKESDSTLKE (215 aa)) form an LT domain region. Glutamate 312 is an active-site residue. A disordered region spans residues 459–483 (QIQNNEEQSSVPQEISKESDSTLKE). Basic and acidic residues predominate over residues 473–483 (ISKESDSTLKE).

This sequence in the N-terminal section; belongs to the bacterial solute-binding protein 3 family. It in the C-terminal section; belongs to the transglycosylase Slt family.

The protein resides in the cell outer membrane. It catalyses the reaction Exolytic cleavage of the (1-&gt;4)-beta-glycosidic linkage between N-acetylmuramic acid (MurNAc) and N-acetylglucosamine (GlcNAc) residues in peptidoglycan, from either the reducing or the non-reducing ends of the peptidoglycan chains, with concomitant formation of a 1,6-anhydrobond in the MurNAc residue.. In terms of biological role, murein-degrading enzyme that degrades murein glycan strands and insoluble, high-molecular weight murein sacculi, with the concomitant formation of a 1,6-anhydromuramoyl product. Lytic transglycosylases (LTs) play an integral role in the metabolism of the peptidoglycan (PG) sacculus. Their lytic action creates space within the PG sacculus to allow for its expansion as well as for the insertion of various structures such as secretion systems and flagella. The chain is Membrane-bound lytic murein transglycosylase F from Actinobacillus pleuropneumoniae serotype 7 (strain AP76).